We begin with the raw amino-acid sequence, 187 residues long: Ribonuclease M5 (187 aa).

A Toprim domain is found at 5 to 88 (KEVIVVEGKD…AFLPRKAGVP (84 aa)). Mg(2+) contacts are provided by Glu11, Asp57, and Asp59.

This sequence belongs to the ribonuclease M5 family. Mg(2+) serves as cofactor.

The protein resides in the cytoplasm. It carries out the reaction Endonucleolytic cleavage of RNA, removing 21 and 42 nucleotides, respectively, from the 5'- and 3'-termini of a 5S-rRNA precursor.. Functionally, required for correct processing of both the 5' and 3' ends of 5S rRNA precursor. Cleaves both sides of a double-stranded region yielding mature 5S rRNA in one step. The polypeptide is Ribonuclease M5 (Lactiplantibacillus plantarum (strain ATCC BAA-793 / NCIMB 8826 / WCFS1) (Lactobacillus plantarum)).